Here is a 532-residue protein sequence, read N- to C-terminus: Berberine bridge enzyme-like 18 (532 aa).

A signal peptide spans 1 to 29 (MKFQSFFSSVLIFFTTSTLLLSIPHPVSA). N-linked (GlcNAc...) asparagine glycosylation is found at Asn30, Asn33, Asn46, Asn59, Asn147, Asn169, and Asn262. Cysteines 40 and 102 form a disulfide. The FAD-binding PCMH-type domain maps to 80–254 (DVPKPVLILT…LSWKIGLINV (175 aa)). Positions 117–179 (HDYEGLSYVT…RTLAFPAGVC (63 aa)) form a cross-link, 6-(S-cysteinyl)-8alpha-(pros-histidyl)-FAD (His-Cys).

This sequence belongs to the oxygen-dependent FAD-linked oxidoreductase family. Requires FAD as cofactor. In terms of processing, the FAD cofactor is bound via a bicovalent 6-S-cysteinyl, 8alpha-N1-histidyl FAD linkage.

Its subcellular location is the secreted. The protein localises to the cell wall. The polypeptide is Berberine bridge enzyme-like 18 (Arabidopsis thaliana (Mouse-ear cress)).